Consider the following 1141-residue polypeptide: Translocase of chloroplast 125, chloroplastic (1141 aa).

2 disordered regions span residues 1 to 177 and 325 to 431; these read MDAL…ISGY and GFVE…EANE. 2 stretches are compositionally biased toward basic and acidic residues: residues 57 to 72 and 107 to 121; these read RVPEDVRSESEVKRDG and IDGRFQFEDGVREDL. The segment covering 132 to 150 has biased composition (acidic residues); that stretch reads YDDDDDDEEEEEDGSEEGE. A compositionally biased stretch (low complexity) spans 151–167; that stretch reads STSSSIINSEYSSSASN. The span at 328-353 shows a compositional bias: acidic residues; it reads EAEEAESDVFTEGEDGYDDEDEDGDI. 2 stretches are compositionally biased toward low complexity: residues 389-401 and 408-429; these read RSSARRSAATTAT and TASSTQSAATSDASISSESSEA. The 230-residue stretch at 505 to 734 folds into the AIG1-type G domain; that stretch reads DFACTILVLG…KLQEASTPGK (230 aa). A G1 region spans residues 514-521; that stretch reads GKTGVGKS. 517–522 serves as a coordination point for GTP; it reads GVGKSA. Serine 521 contributes to the Mg(2+) binding site. The tract at residues 541–545 is G2; that stretch reads STTKV. Residues 561 to 564 form a G3 region; the sequence is DTPG. Residues 633 to 636 form a G4 region; that stretch reads THAS. GTP contacts are provided by residues histidine 634 and 682-683; that span reads EN. The segment at 682–684 is G5; the sequence is ENH. Disordered regions lie at residues 758–795 and 832–871; these read QLKMPDEQHGESEDSDDDSDEEDEEEGDEYDDLPPFRP and IRRRRERKKQASVMSKEEPSIPGDGAEDESGQPATVAVPM. Acidic residues predominate over residues 770–789; that stretch reads EDSDDDSDEEDEEEGDEYDD. Basic residues predominate over residues 832–841; that stretch reads IRRRRERKKQ. Residues 1116–1136 form a helical membrane-spanning segment; that stretch reads MVLIGIVPILRSLINCRFGFG.

It belongs to the TRAFAC class TrmE-Era-EngA-EngB-Septin-like GTPase superfamily. AIG1/Toc34/Toc159-like paraseptin GTPase family. TOC159 subfamily. In terms of assembly, part of the TOC core complex. Mg(2+) serves as cofactor.

It is found in the plastid. It localises to the chloroplast outer membrane. In terms of biological role, GTPase involved in protein precursor import into chloroplasts. Seems to recognize chloroplast-destined precursor proteins and regulate their presentation to the translocation channel through GTP hydrolysis. Probably specialized in the import of nuclear encoded non-photosynthetic preproteins from the cytoplasm to the chloroplast. This Physcomitrium patens (Spreading-leaved earth moss) protein is Translocase of chloroplast 125, chloroplastic.